The primary structure comprises 261 residues: Indole-3-glycerol phosphate synthase (261 aa).

This sequence belongs to the TrpC family.

The enzyme catalyses 1-(2-carboxyphenylamino)-1-deoxy-D-ribulose 5-phosphate + H(+) = (1S,2R)-1-C-(indol-3-yl)glycerol 3-phosphate + CO2 + H2O. Its pathway is amino-acid biosynthesis; L-tryptophan biosynthesis; L-tryptophan from chorismate: step 4/5. This chain is Indole-3-glycerol phosphate synthase, found in Campylobacter hominis (strain ATCC BAA-381 / DSM 21671 / CCUG 45161 / LMG 19568 / NCTC 13146 / CH001A).